The primary structure comprises 412 residues: 8-amino-7-oxononanoate synthase (412 aa).

Pyridoxal 5'-phosphate is bound at residue G106 to Y107. A substrate-binding site is contributed by H131. S187, H219, and T247 together coordinate pyridoxal 5'-phosphate. K250 is subject to N6-(pyridoxal phosphate)lysine. Residue T370 participates in substrate binding.

Belongs to the class-II pyridoxal-phosphate-dependent aminotransferase family. BioF subfamily. As to quaternary structure, homodimer. Pyridoxal 5'-phosphate is required as a cofactor.

It carries out the reaction 6-carboxyhexanoyl-[ACP] + L-alanine + H(+) = (8S)-8-amino-7-oxononanoate + holo-[ACP] + CO2. Its pathway is cofactor biosynthesis; biotin biosynthesis. In terms of biological role, 8-amino-7-oxononanoate synthase; part of the cluster involved in the biosynthesis of biotin (also known as vitamin B8 or vitamin H), a water-soluble vitamin that functions as a prosthetic group of many carboxylases, such as acetyl-CoA carboxylase and pyruvate carboxylase. Catalyzes the decarboxylative condensation of pimeloyl-[acyl-carrier protein] and L-alanine to produce 8-amino-7-oxononanoate (AON). This chain is 8-amino-7-oxononanoate synthase, found in Emericella nidulans (strain FGSC A4 / ATCC 38163 / CBS 112.46 / NRRL 194 / M139) (Aspergillus nidulans).